The sequence spans 497 residues: uncharacterized protein (497 aa).

A run of 11 helical transmembrane segments spans residues 91 to 111 (WVGTSFYLGFMVFSLPLSTLL), 119 to 139 (VTSAFIVAWGILMTLTCLVHS), 149 to 169 (LLGILESVITPAFVLFIAQWY), 179 to 199 (AFLVAWNGLGGLIGGSMSYGL), 215 to 235 (ILFIITGLITIINGVFIFIHI), 283 to 303 (MYLYFFLQIAVAIPNGGLSNF), 319 to 339 (LLMNMPTSSISFAALTLFGLI), 347 to 367 (MDIALVGLAINLTSGSLIAFA), 374 to 394 (LAGYWLFGISPIPYICILSCI), 406 to 426 (FMSAVSMIGYCVGNMVGPQTF), and 439 to 459 (VSFVVCYCVAIFIIIAIYAVN).

The protein belongs to the major facilitator superfamily. Allantoate permease family.

It localises to the golgi apparatus. It is found in the membrane. This is an uncharacterized protein from Schizosaccharomyces pombe (strain 972 / ATCC 24843) (Fission yeast).